We begin with the raw amino-acid sequence, 321 residues long: Phospho-N-acetylmuramoyl-pentapeptide-transferase (321 aa).

10 helical membrane-spanning segments follow: residues 6–26 (IFIPIVVSFAITVSVMPLFIG), 54–74 (MGGVVFLVASLITSLAMGLFF), 77–97 (FTPSLLIILFILVLYGLLGYL), 117–137 (LIGQIFGGLVFYFVYRSEGFS), 143–163 (FGVAEVPLGIFYGVFIIFWLV), 175–195 (IDGLVAGLGTISFGTYAIIAW), 200–220 (FDVVIICLSVIGGLIGFFPYN), 226–246 (IFMGDVGSLALGGLLAAISII), 251–271 (WTLLLIGLVYVCETASVILQV), and 301–321 (IDFVFWSVGLICSGITLWILF).

This sequence belongs to the glycosyltransferase 4 family. MraY subfamily. Mg(2+) is required as a cofactor.

It localises to the cell membrane. The catalysed reaction is UDP-N-acetyl-alpha-D-muramoyl-L-alanyl-gamma-D-glutamyl-L-lysyl-D-alanyl-D-alanine + di-trans,octa-cis-undecaprenyl phosphate = Mur2Ac(oyl-L-Ala-gamma-D-Glu-L-Lys-D-Ala-D-Ala)-di-trans,octa-cis-undecaprenyl diphosphate + UMP. Its pathway is cell wall biogenesis; peptidoglycan biosynthesis. Catalyzes the initial step of the lipid cycle reactions in the biosynthesis of the cell wall peptidoglycan: transfers peptidoglycan precursor phospho-MurNAc-pentapeptide from UDP-MurNAc-pentapeptide onto the lipid carrier undecaprenyl phosphate, yielding undecaprenyl-pyrophosphoryl-MurNAc-pentapeptide, known as lipid I. In Enterococcus faecalis (strain ATCC 700802 / V583), this protein is Phospho-N-acetylmuramoyl-pentapeptide-transferase.